The following is a 413-amino-acid chain: Multifunctional CCA protein (413 aa).

ATP-binding residues include glycine 8 and arginine 11. CTP-binding residues include glycine 8 and arginine 11. 2 residues coordinate Mg(2+): aspartate 21 and aspartate 23. Residues arginine 91, arginine 137, and arginine 140 each contribute to the ATP site. Arginine 91, arginine 137, and arginine 140 together coordinate CTP. An HD domain is found at threonine 228–tryptophan 329.

The protein belongs to the tRNA nucleotidyltransferase/poly(A) polymerase family. Bacterial CCA-adding enzyme type 1 subfamily. In terms of assembly, monomer. Can also form homodimers and oligomers. The cofactor is Mg(2+). Requires Ni(2+) as cofactor.

It catalyses the reaction a tRNA precursor + 2 CTP + ATP = a tRNA with a 3' CCA end + 3 diphosphate. The enzyme catalyses a tRNA with a 3' CCA end + 2 CTP + ATP = a tRNA with a 3' CCACCA end + 3 diphosphate. Catalyzes the addition and repair of the essential 3'-terminal CCA sequence in tRNAs without using a nucleic acid template. Adds these three nucleotides in the order of C, C, and A to the tRNA nucleotide-73, using CTP and ATP as substrates and producing inorganic pyrophosphate. tRNA 3'-terminal CCA addition is required both for tRNA processing and repair. Also involved in tRNA surveillance by mediating tandem CCA addition to generate a CCACCA at the 3' terminus of unstable tRNAs. While stable tRNAs receive only 3'-terminal CCA, unstable tRNAs are marked with CCACCA and rapidly degraded. In Salmonella typhi, this protein is Multifunctional CCA protein.